Here is a 261-residue protein sequence, read N- to C-terminus: Putative ketoacyl reductase (261 aa).

NADP(+)-binding residues include threonine 15, serine 16, isoleucine 18, arginine 38, glycine 39, aspartate 63, valine 64, asparagine 90, tyrosine 157, lysine 161, valine 190, and threonine 192. Tyrosine 157 (proton acceptor) is an active-site residue.

This sequence belongs to the short-chain dehydrogenases/reductases (SDR) family. Homotetramer.

Its pathway is antibiotic biosynthesis; actinorhodin biosynthesis. The protein is Putative ketoacyl reductase (actIII) of Streptomyces coelicolor (strain ATCC BAA-471 / A3(2) / M145).